Consider the following 369-residue polypeptide: MSQNIVPKSAYREIMLSGHPMMDVRAPIEFNKGAFPSSTNLPLMQDSERQKVGTCYKNKGQDAAIALGHSLVNGQIKQQRVEAWLEFISLHPNAYLYCFRGGLRSQLTQQWIKEAGIEIPYVEGGYKAMRQYLIEVIDEAPKQSPIHILSGITGSGKTDFLLQRSEAIDLEGLAHHRGSSFGRYHEPQPSQINFENNLAVSLLKHQERAEKCLLVEDESFLIGRSAIPKQFYSGMQAADMLVLEEPEGARLNRLLNEYVHKMHSGYVERLGEEAGFDAFAEYLSQSITGIKKRLGGQLHDEFQSIIANALNIQRQRGDTQPHMEWISLLLTKYYDPMYQYQLDKKQSRVIFKGSHQAMHEWLDEYSSKG.

Residues 15-138 (MLSGHPMMDV…MRQYLIEVID (124 aa)) form the Rhodanese domain. The S-selanylcysteine intermediate role is filled by Cys98.

This sequence belongs to the SelU family. In terms of assembly, monomer.

It catalyses the reaction 5-methylaminomethyl-2-thiouridine(34) in tRNA + selenophosphate + (2E)-geranyl diphosphate + H2O + H(+) = 5-methylaminomethyl-2-selenouridine(34) in tRNA + (2E)-thiogeraniol + phosphate + diphosphate. It carries out the reaction 5-methylaminomethyl-2-thiouridine(34) in tRNA + (2E)-geranyl diphosphate = 5-methylaminomethyl-S-(2E)-geranyl-thiouridine(34) in tRNA + diphosphate. The catalysed reaction is 5-methylaminomethyl-S-(2E)-geranyl-thiouridine(34) in tRNA + selenophosphate + H(+) = 5-methylaminomethyl-2-(Se-phospho)selenouridine(34) in tRNA + (2E)-thiogeraniol. The enzyme catalyses 5-methylaminomethyl-2-(Se-phospho)selenouridine(34) in tRNA + H2O = 5-methylaminomethyl-2-selenouridine(34) in tRNA + phosphate. In terms of biological role, involved in the post-transcriptional modification of the uridine at the wobble position (U34) of tRNA(Lys), tRNA(Glu) and tRNA(Gln). Catalyzes the conversion of 2-thiouridine (S2U-RNA) to 2-selenouridine (Se2U-RNA). Acts in a two-step process involving geranylation of 2-thiouridine (S2U) to S-geranyl-2-thiouridine (geS2U) and subsequent selenation of the latter derivative to 2-selenouridine (Se2U) in the tRNA chain. The sequence is that of tRNA 2-selenouridine synthase from Shewanella sediminis (strain HAW-EB3).